The primary structure comprises 465 residues: Ribulose bisphosphate carboxylase large chain (465 aa).

Lys-4 is subject to N6,N6,N6-trimethyllysine. Substrate contacts are provided by Asn-113 and Thr-163. Lys-165 functions as the Proton acceptor in the catalytic mechanism. Lys-167 contacts substrate. Mg(2+) is bound by residues Lys-191, Asp-193, and Glu-194. At Lys-191 the chain carries N6-carboxylysine. His-284 functions as the Proton acceptor in the catalytic mechanism. Substrate-binding residues include Arg-285, His-317, and Ser-369.

This sequence belongs to the RuBisCO large chain family. Type I subfamily. Heterohexadecamer of 8 large chains and 8 small chains; disulfide-linked. The disulfide link is formed within the large subunit homodimers. It depends on Mg(2+) as a cofactor. In terms of processing, the disulfide bond which can form in the large chain dimeric partners within the hexadecamer appears to be associated with oxidative stress and protein turnover.

Its subcellular location is the plastid. It localises to the chloroplast. It catalyses the reaction 2 (2R)-3-phosphoglycerate + 2 H(+) = D-ribulose 1,5-bisphosphate + CO2 + H2O. The enzyme catalyses D-ribulose 1,5-bisphosphate + O2 = 2-phosphoglycolate + (2R)-3-phosphoglycerate + 2 H(+). In terms of biological role, ruBisCO catalyzes two reactions: the carboxylation of D-ribulose 1,5-bisphosphate, the primary event in carbon dioxide fixation, as well as the oxidative fragmentation of the pentose substrate in the photorespiration process. Both reactions occur simultaneously and in competition at the same active site. This Cornus florida (Flowering dogwood) protein is Ribulose bisphosphate carboxylase large chain.